We begin with the raw amino-acid sequence, 242 residues long: Ribonuclease PH (242 aa).

Phosphate contacts are provided by residues arginine 86 and 124-126; that span reads GTR.

The protein belongs to the RNase PH family. In terms of assembly, homohexameric ring arranged as a trimer of dimers.

It catalyses the reaction tRNA(n+1) + phosphate = tRNA(n) + a ribonucleoside 5'-diphosphate. In terms of biological role, phosphorolytic 3'-5' exoribonuclease that plays an important role in tRNA 3'-end maturation. Removes nucleotide residues following the 3'-CCA terminus of tRNAs; can also add nucleotides to the ends of RNA molecules by using nucleoside diphosphates as substrates, but this may not be physiologically important. Probably plays a role in initiation of 16S rRNA degradation (leading to ribosome degradation) during starvation. The protein is Ribonuclease PH of Bacillus pumilus (strain SAFR-032).